The primary structure comprises 403 residues: RILP-like protein 1 (403 aa).

The residue at position 7 (Ser-7) is a Phosphoserine. In terms of domain architecture, RH1 spans 10 to 97 (AAESALEKNV…RLERMDRIEK (88 aa)). The residue at position 47 (Cys-47) is an S-nitrosocysteine. Positions 76–265 (ELDELRLELD…GELNQNGEEE (190 aa)) form a coiled coil. An RH2 domain is found at 291-356 (RPRFTLQELR…PQPESGIKRL (66 aa)). The tract at residues 329-348 (EEENQIPQPPPIAHPRMSPQ) is disordered.

Belongs to the RILPL family. Interacts (when S-nitrosylated) with GAPDH. Interacts with RAB8A; interaction is dependent on the phosphorylation of 'Thr-72' of RAB8A. Interacts with RAB10 and RAB12; the interaction is dependent on the phosphorylation of 'Thr-73' of RAB10, and 'Ser-105' of RAB12. S-nitrosylation is required for the interaction with GAPDH.

The protein resides in the cytoplasm. The protein localises to the cytosol. Its subcellular location is the cytoskeleton. It localises to the microtubule organizing center. It is found in the centrosome. The protein resides in the centriole. The protein localises to the cilium basal body. In terms of biological role, plays a role in the regulation of cell shape and polarity. Plays a role in cellular protein transport, including protein transport away from primary cilia. Neuroprotective protein, which acts by sequestring GAPDH in the cytosol and prevent the apoptotic function of GAPDH in the nucleus. Competes with SIAH1 for binding GAPDH. Does not regulate lysosomal morphology and distribution. Binds to RAB10 following LRRK2-mediated RAB10 phosphorylation which leads to inhibition of ciliogenesis. The sequence is that of RILP-like protein 1 (RILPL1) from Bos taurus (Bovine).